A 600-amino-acid polypeptide reads, in one-letter code: Aspartate--tRNA(Asp/Asn) ligase (600 aa).

An L-aspartate-binding site is contributed by E174. An aspartate region spans residues 198-201; it reads QLFK. R220 contacts L-aspartate. Residues 220-222 and Q229 each bind ATP; that span reads RDE. L-aspartate is bound at residue H457. An ATP-binding site is contributed by E491. R498 is a binding site for L-aspartate. Residue 543 to 546 participates in ATP binding; the sequence is GLDR.

It belongs to the class-II aminoacyl-tRNA synthetase family. Type 1 subfamily. Homodimer.

Its subcellular location is the cytoplasm. The enzyme catalyses tRNA(Asx) + L-aspartate + ATP = L-aspartyl-tRNA(Asx) + AMP + diphosphate. Aspartyl-tRNA synthetase with relaxed tRNA specificity since it is able to aspartylate not only its cognate tRNA(Asp) but also tRNA(Asn). Reaction proceeds in two steps: L-aspartate is first activated by ATP to form Asp-AMP and then transferred to the acceptor end of tRNA(Asp/Asn). In Burkholderia pseudomallei (strain 668), this protein is Aspartate--tRNA(Asp/Asn) ligase.